The chain runs to 275 residues: MQHDGYWVFSQVDPVAFSLGPLSVRWYGLMYLFGFAFAMWLAGRRADTPNSGWTRNEVSDLLFYGFLGVILGGRVGYVLFYNFDMFLADPIYLFKIWTGGMSFHGGLIGVITAMIWFAHKTKRHFFTVADFVAPLIPFGLGVGRIGNFLNGELWGRVTDVPWAIIFPEAGPEPRHPSQLYQFALEGVVLFIILNLFWRKNPPRGAISGLFLFCYGLFRFLVEFVRQPDSQLGLYFQEISMGQILSMPMIVAGALMVWAAYKRPQLFGNAGKEVKQ.

Transmembrane regions (helical) follow at residues 22–42 (LSVR…MWLA), 61–81 (LLFY…VLFY), 96–116 (IWTG…AMIW), 125–145 (FFTV…VGRI), 177–197 (SQLY…NLFW), 204–224 (GAIS…VEFV), and 238–258 (ISMG…MVWA). Residue arginine 144 coordinates a 1,2-diacyl-sn-glycero-3-phospho-(1'-sn-glycerol).

The protein belongs to the Lgt family.

It localises to the cell inner membrane. It carries out the reaction L-cysteinyl-[prolipoprotein] + a 1,2-diacyl-sn-glycero-3-phospho-(1'-sn-glycerol) = an S-1,2-diacyl-sn-glyceryl-L-cysteinyl-[prolipoprotein] + sn-glycerol 1-phosphate + H(+). The protein operates within protein modification; lipoprotein biosynthesis (diacylglyceryl transfer). In terms of biological role, catalyzes the transfer of the diacylglyceryl group from phosphatidylglycerol to the sulfhydryl group of the N-terminal cysteine of a prolipoprotein, the first step in the formation of mature lipoproteins. The chain is Phosphatidylglycerol--prolipoprotein diacylglyceryl transferase from Aeromonas salmonicida (strain A449).